A 101-amino-acid chain; its full sequence is Small ribosomal subunit protein uS14 (101 aa).

This sequence belongs to the universal ribosomal protein uS14 family. Part of the 30S ribosomal subunit. Contacts proteins S3 and S10.

Binds 16S rRNA, required for the assembly of 30S particles and may also be responsible for determining the conformation of the 16S rRNA at the A site. This is Small ribosomal subunit protein uS14 from Bartonella quintana (strain Toulouse) (Rochalimaea quintana).